A 248-amino-acid chain; its full sequence is Cytochrome c oxidase subunit 2 (248 aa).

At 1–43 (MTNLLNNWLIINQFGYDLPEPWQLGLQDAAHPVMEEIIFFHDQ) the chain is on the mitochondrial intermembrane side. The helical transmembrane segment at 44 to 65 (VMFILIIIITTVLWLIVKALSG) threads the bilayer. Residues 66 to 79 (KAYHRYLVDGTLLE) lie on the Mitochondrial matrix side of the membrane. Residues 80-99 (IIWTIVPAIILILIAFPSLK) form a helical membrane-spanning segment. The Mitochondrial intermembrane portion of the chain corresponds to 100–248 (LLYLMDEVMD…INWVLSGSDE (149 aa)). Residues histidine 180, cysteine 215, glutamate 217, cysteine 219, histidine 223, and methionine 226 each contribute to the Cu cation site. Residue glutamate 217 coordinates Mg(2+).

It belongs to the cytochrome c oxidase subunit 2 family. In terms of assembly, component of the cytochrome c oxidase (complex IV, CIV), a multisubunit enzyme composed of a catalytic core of 3 subunits and several supernumerary subunits. The complex exists as a monomer or a dimer and forms supercomplexes (SCs) in the inner mitochondrial membrane with ubiquinol-cytochrome c oxidoreductase (cytochrome b-c1 complex, complex III, CIII). Cu cation is required as a cofactor.

It localises to the mitochondrion inner membrane. It catalyses the reaction 4 Fe(II)-[cytochrome c] + O2 + 8 H(+)(in) = 4 Fe(III)-[cytochrome c] + 2 H2O + 4 H(+)(out). Component of the cytochrome c oxidase, the last enzyme in the mitochondrial electron transport chain which drives oxidative phosphorylation. The respiratory chain contains 3 multisubunit complexes succinate dehydrogenase (complex II, CII), ubiquinol-cytochrome c oxidoreductase (cytochrome b-c1 complex, complex III, CIII) and cytochrome c oxidase (complex IV, CIV), that cooperate to transfer electrons derived from NADH and succinate to molecular oxygen, creating an electrochemical gradient over the inner membrane that drives transmembrane transport and the ATP synthase. Cytochrome c oxidase is the component of the respiratory chain that catalyzes the reduction of oxygen to water. Electrons originating from reduced cytochrome c in the intermembrane space (IMS) are transferred via the dinuclear copper A center (CU(A)) of subunit 2 and heme A of subunit 1 to the active site in subunit 1, a binuclear center (BNC) formed by heme A3 and copper B (CU(B)). The BNC reduces molecular oxygen to 2 water molecules using 4 electrons from cytochrome c in the IMS and 4 protons from the mitochondrial matrix. This is Cytochrome c oxidase subunit 2 (COII) from Metridium senile (Brown sea anemone).